Reading from the N-terminus, the 490-residue chain is GTPase Der (490 aa).

Residues 1–165 (MRIAILGRPN…RIRQVAEIPL (165 aa)) form the EngA-type G 1 domain. GTP contacts are provided by residues 7 to 14 (GRPNVGKS), 54 to 58 (DTGGV), and 117 to 120 (NKAD). A disordered region spans residues 165 to 184 (LPSAEEQENTQEEEFSSKES). Residues 169–178 (EEQENTQEEE) show a composition bias toward acidic residues. The region spanning 227–400 (LKVALIGHPN…AVDDVYTIAT (174 aa)) is the EngA-type G 2 domain. GTP contacts are provided by residues 233-240 (GHPNVGKS), 280-284 (DTAGL), and 345-348 (NKWD). In terms of domain architecture, KH-like spans 401–485 (TKLSTSLVNK…PFDLEYKAKP (85 aa)).

Belongs to the TRAFAC class TrmE-Era-EngA-EngB-Septin-like GTPase superfamily. EngA (Der) GTPase family. Associates with the 50S ribosomal subunit.

Its function is as follows. GTPase that plays an essential role in the late steps of ribosome biogenesis. This Chlamydia muridarum (strain MoPn / Nigg) protein is GTPase Der.